The chain runs to 2271 residues: Nucleolar pre-ribosomal-associated protein 1 (2271 aa).

The tract at residues 1–43 is disordered; the sequence is MGVPKRKASGGQDGAASSAGAAKRARKEELTGVRFKAQLKDPQ. Residues Ser17 and Ser1143 each carry the phosphoserine modification. A disordered region spans residues 2021 to 2042; it reads VMPARAKGPRGRKRRPGEAEEM.

The protein resides in the nucleus. The protein localises to the nucleolus. The polypeptide is Nucleolar pre-ribosomal-associated protein 1 (URB1) (Homo sapiens (Human)).